The following is a 146-amino-acid chain: Small ribosomal subunit protein uS5 (146 aa).

The 64-residue stretch at F8 to V71 folds into the S5 DRBM domain.

This sequence belongs to the universal ribosomal protein uS5 family. Part of the 30S ribosomal subunit. Contacts proteins S4 and S8.

Its function is as follows. With S4 and S12 plays an important role in translational accuracy. Located at the back of the 30S subunit body where it stabilizes the conformation of the head with respect to the body. This Helicobacter hepaticus (strain ATCC 51449 / 3B1) protein is Small ribosomal subunit protein uS5.